Reading from the N-terminus, the 351-residue chain is Holliday junction branch migration complex subunit RuvB (351 aa).

The segment at 1–186 (MDEKIETRLI…FGIVQRLEFY (186 aa)) is large ATPase domain (RuvB-L). ATP is bound by residues I25, R26, G67, K70, T71, T72, 133–135 (EDF), R176, Y186, and R223. T71 lines the Mg(2+) pocket. A small ATPAse domain (RuvB-S) region spans residues 187 to 257 (RIPDLIHIVK…IAKEALDLLN (71 aa)). Positions 260–351 (IRGLDVMDRK…ENFDLLGKVE (92 aa)) are head domain (RuvB-H). R296, R315, and R320 together coordinate DNA.

It belongs to the RuvB family. Homohexamer. Forms an RuvA(8)-RuvB(12)-Holliday junction (HJ) complex. HJ DNA is sandwiched between 2 RuvA tetramers; dsDNA enters through RuvA and exits via RuvB. An RuvB hexamer assembles on each DNA strand where it exits the tetramer. Each RuvB hexamer is contacted by two RuvA subunits (via domain III) on 2 adjacent RuvB subunits; this complex drives branch migration. In the full resolvosome a probable DNA-RuvA(4)-RuvB(12)-RuvC(2) complex forms which resolves the HJ.

The protein resides in the cytoplasm. It carries out the reaction ATP + H2O = ADP + phosphate + H(+). In terms of biological role, the RuvA-RuvB-RuvC complex processes Holliday junction (HJ) DNA during genetic recombination and DNA repair, while the RuvA-RuvB complex plays an important role in the rescue of blocked DNA replication forks via replication fork reversal (RFR). RuvA specifically binds to HJ cruciform DNA, conferring on it an open structure. The RuvB hexamer acts as an ATP-dependent pump, pulling dsDNA into and through the RuvAB complex. RuvB forms 2 homohexamers on either side of HJ DNA bound by 1 or 2 RuvA tetramers; 4 subunits per hexamer contact DNA at a time. Coordinated motions by a converter formed by DNA-disengaged RuvB subunits stimulates ATP hydrolysis and nucleotide exchange. Immobilization of the converter enables RuvB to convert the ATP-contained energy into a lever motion, pulling 2 nucleotides of DNA out of the RuvA tetramer per ATP hydrolyzed, thus driving DNA branch migration. The RuvB motors rotate together with the DNA substrate, which together with the progressing nucleotide cycle form the mechanistic basis for DNA recombination by continuous HJ branch migration. Branch migration allows RuvC to scan DNA until it finds its consensus sequence, where it cleaves and resolves cruciform DNA. This Coxiella burnetii (strain CbuG_Q212) (Coxiella burnetii (strain Q212)) protein is Holliday junction branch migration complex subunit RuvB.